The chain runs to 151 residues: MLKCQNNASLGLDLGEKTLGIALSQTGIIAQNLKTIFFATHKYDRLIAPLQEIIFQYQIKTIVLGYPKHMNNDIGIKAKISSDFKKTLENKFEQVKVILWDERLSTVQAIQMLKTNNKKKGKILQMKDEIAATIILQNYLDYIKLHTNKEH.

The protein belongs to the YqgF nuclease family.

It is found in the cytoplasm. Its function is as follows. Could be a nuclease involved in processing of the 5'-end of pre-16S rRNA. This is Putative pre-16S rRNA nuclease from Onion yellows phytoplasma (strain OY-M).